The primary structure comprises 144 residues: 3-hydroxyacyl-[acyl-carrier-protein] dehydratase FabZ (144 aa).

Residue His52 is part of the active site.

It belongs to the thioester dehydratase family. FabZ subfamily.

It localises to the cytoplasm. The enzyme catalyses a (3R)-hydroxyacyl-[ACP] = a (2E)-enoyl-[ACP] + H2O. Functionally, involved in unsaturated fatty acids biosynthesis. Catalyzes the dehydration of short chain beta-hydroxyacyl-ACPs and long chain saturated and unsaturated beta-hydroxyacyl-ACPs. In Syntrophomonas wolfei subsp. wolfei (strain DSM 2245B / Goettingen), this protein is 3-hydroxyacyl-[acyl-carrier-protein] dehydratase FabZ.